Consider the following 277-residue polypeptide: MKVQDLDLNYQLVEEILSSFLRNEIRKFGFQSLVLGLSGGIDSAVVCELAVRALGAENVLAVKMPYRASSRESLEHAELMVERLSIRSEEHDISQPVDAFFTGIPEESRLRRGNIMARARMIVLYDVSARDGCLVAGTSNKTELLLGYGTMFGDMASAVNPIGDLYKSQVRGLARHLGIPAALIDKAPSADLWQGQSDEADLGFTYEEVDILLYQMLELRMDKESILAEGVPEPFYARVRQMVVRNQYKRLMPVIAKISGRTPGIDFRYARDWQEIS.

36 to 43 (GLSGGIDS) provides a ligand contact to ATP. D42 is a Mg(2+) binding site. R118 lines the deamido-NAD(+) pocket. T138 is a binding site for ATP. Position 143 (E143) interacts with Mg(2+). K167 and S189 together coordinate ATP.

Belongs to the NAD synthetase family. In terms of assembly, homodimer.

It catalyses the reaction deamido-NAD(+) + NH4(+) + ATP = AMP + diphosphate + NAD(+) + H(+). The protein operates within cofactor biosynthesis; NAD(+) biosynthesis; NAD(+) from deamido-NAD(+) (ammonia route): step 1/1. In terms of biological role, catalyzes the ATP-dependent amidation of deamido-NAD to form NAD. Uses ammonia as a nitrogen source. This chain is NH(3)-dependent NAD(+) synthetase, found in Chlorobium phaeovibrioides (strain DSM 265 / 1930) (Prosthecochloris vibrioformis (strain DSM 265)).